Here is a 677-residue protein sequence, read N- to C-terminus: Methionine--tRNA ligase (677 aa).

The 'HIGH' region motif lies at 15–25 (PYANGSIHLGH). Residues cysteine 146, cysteine 149, cysteine 159, and cysteine 162 each contribute to the Zn(2+) site. The 'KMSKS' region signature appears at 333 to 337 (KMSKS). Lysine 336 contacts ATP. The region spanning 575 to 677 (DFAKVDLRVA…AGAKPGHQVK (103 aa)) is the tRNA-binding domain.

This sequence belongs to the class-I aminoacyl-tRNA synthetase family. MetG type 1 subfamily. As to quaternary structure, homodimer. Zn(2+) is required as a cofactor.

Its subcellular location is the cytoplasm. The catalysed reaction is tRNA(Met) + L-methionine + ATP = L-methionyl-tRNA(Met) + AMP + diphosphate. In terms of biological role, is required not only for elongation of protein synthesis but also for the initiation of all mRNA translation through initiator tRNA(fMet) aminoacylation. The sequence is that of Methionine--tRNA ligase from Escherichia coli O6:K15:H31 (strain 536 / UPEC).